Consider the following 238-residue polypeptide: Valine-rich protein (238 aa).

A signal peptide spans 1-16 (MQAVLLVVALFGAALA).

Prismatic layer of shell (at protein level). Expressed primarily in the mantle with highest level in the mantle edge and lower level in the mantle pallium.

The protein resides in the secreted. This chain is Valine-rich protein, found in Pinctada maxima (Silver-lipped pearl oyster).